A 492-amino-acid polypeptide reads, in one-letter code: Probable malate:quinone oxidoreductase 1 (492 aa).

Belongs to the MQO family. FAD serves as cofactor.

It catalyses the reaction (S)-malate + a quinone = a quinol + oxaloacetate. It functions in the pathway carbohydrate metabolism; tricarboxylic acid cycle; oxaloacetate from (S)-malate (quinone route): step 1/1. This is Probable malate:quinone oxidoreductase 1 from Staphylococcus epidermidis (strain ATCC 35984 / DSM 28319 / BCRC 17069 / CCUG 31568 / BM 3577 / RP62A).